Here is a 943-residue protein sequence, read N- to C-terminus: WD repeat-containing protein 3 (943 aa).

WD repeat units follow at residues Ser21–Ile60, Gly63–Thr102, Gly105–Arg144, Gly147–Thr186, and Gly189–Asp228. Residues Ser240 and Ser241 each carry the phosphoserine modification. The residue at position 257 (Thr257) is a Phosphothreonine. The stretch at Glu277–Lys316 is one WD 6 repeat. A disordered region spans residues Arg326–Val345. WD repeat units follow at residues Gly413–Thr451, Thr453–Asp493, Ala494–Ser533, Gln547–Ser586, Gly589–Phe630, Ala631–Thr670, and Gly673–Glu712. Residues Lys474 and Lys529 each participate in a glycyl lysine isopeptide (Lys-Gly) (interchain with G-Cter in SUMO2) cross-link. At Ser726 the chain carries Phosphoserine.

The protein belongs to the WD repeat WDR3/UTP12 family. Part of the small subunit (SSU) processome, composed of more than 70 proteins and the RNA chaperone small nucleolar RNA (snoRNA) U3. In terms of tissue distribution, ubiquitous.

It localises to the nucleus. The protein localises to the nucleolus. Its function is as follows. Part of the small subunit (SSU) processome, first precursor of the small eukaryotic ribosomal subunit. During the assembly of the SSU processome in the nucleolus, many ribosome biogenesis factors, an RNA chaperone and ribosomal proteins associate with the nascent pre-rRNA and work in concert to generate RNA folding, modifications, rearrangements and cleavage as well as targeted degradation of pre-ribosomal RNA by the RNA exosome. The chain is WD repeat-containing protein 3 from Homo sapiens (Human).